The primary structure comprises 400 residues: S-adenosylmethionine synthase (400 aa).

Histidine 17 is an ATP binding site. Mg(2+) is bound at residue aspartate 19. A K(+)-binding site is contributed by glutamate 45. Residues glutamate 58 and glutamine 101 each contribute to the L-methionine site. The flexible loop stretch occupies residues 101 to 111; it reads QSADIAMGVDQ. ATP-binding positions include 177 to 179, 244 to 245, aspartate 253, 259 to 260, alanine 276, and lysine 280; these read DGK, RF, and RK. Position 253 (aspartate 253) interacts with L-methionine. Lysine 284 provides a ligand contact to L-methionine.

It belongs to the AdoMet synthase family. As to quaternary structure, homotetramer; dimer of dimers. The cofactor is Mg(2+). Requires K(+) as cofactor.

It is found in the cytoplasm. It catalyses the reaction L-methionine + ATP + H2O = S-adenosyl-L-methionine + phosphate + diphosphate. It participates in amino-acid biosynthesis; S-adenosyl-L-methionine biosynthesis; S-adenosyl-L-methionine from L-methionine: step 1/1. In terms of biological role, catalyzes the formation of S-adenosylmethionine (AdoMet) from methionine and ATP. The overall synthetic reaction is composed of two sequential steps, AdoMet formation and the subsequent tripolyphosphate hydrolysis which occurs prior to release of AdoMet from the enzyme. The polypeptide is S-adenosylmethionine synthase (Bacillus velezensis (strain DSM 23117 / BGSC 10A6 / LMG 26770 / FZB42) (Bacillus amyloliquefaciens subsp. plantarum)).